We begin with the raw amino-acid sequence, 404 residues long: MSENQRLGLSEEEVEAAEVLGVLKQSCRQKSQPSEDVSQADKMPASESSTTPLNILDRVSNKIISNVVTFYDEINTNKRPLKSIGRLLDDDDDEHDDYDYNDDEFFTNKRQKLSRAIAKGKDNLKEYKLNMSIESKKRLVTCLHLLKLANKQLSDKISCLQDLVEKEQVHPLHKQDGNARTTTGAGEDETSSDEDDDDEEFFDASEQVNASEQSIVVKMEVVGTVKKVYSLISKFTANSLPEPARSQVRESLLNLPTNWFDSVHSTSLPHHASFHYANCEEQKVEQQQQQQQQQQQQQLLQQQLLQQQQQKRNKDGDDSASPSSSVTANGKVLILAKESLEMVRNVMGVVDSTLGKAEEWVKQKQEVKEMIRERFLQQQQQYRQQQQKDGNYVKPSQDNVDSKD.

Phosphoserine is present on Ser10. The disordered stretch occupies residues 25 to 51; that stretch reads QSCRQKSQPSEDVSQADKMPASESSTT. Positions 26–37 are enriched in polar residues; it reads SCRQKSQPSEDV. Residues 109–138 form a basic motif region; sequence KRQKLSRAIAKGKDNLKEYKLNMSIESKKR. The tract at residues 139 to 160 is leucine-zipper; that stretch reads LVTCLHLLKLANKQLSDKISCL. Disordered stretches follow at residues 170–201, 305–327, and 378–404; these read HPLH…DEEF, LQQQ…SSVT, and QQQQ…DSKD. Over residues 186-201 the composition is skewed to acidic residues; sequence GEDETSSDEDDDDEEF. The short motif at 200-206 is the FFAT element; it reads EFFDASE. Residues 378 to 387 show a composition bias toward low complexity; it reads QQQQYRQQQQ. Polar residues predominate over residues 394–404; sequence KPSQDNVDSKD.

As to quaternary structure, interacts with SCS2.

The protein resides in the endoplasmic reticulum. The protein localises to the nucleus. Negative regulator of the transcriptional complex INO2-INO4 in response to phospholipid precursor availability. When precursors become limiting, OPI1 is retained at the endoplasmic reticulum (ER) and INO2-INO4 activates INO1 and other genes required for phospholipid biosynthesis, whereas abundant precursor availability results in targeting of OPI1 to the nucleus to repress transcription of these genes. Binds directly to phosphatidic acid, which is required for ER targeting and may act as sensing mechanism for precursor availability, as phosphatidic acid becomes rapidly depleted upon phospholipid biosynthesis. The polypeptide is Transcriptional repressor OPI1 (OPI1) (Saccharomyces cerevisiae (strain ATCC 204508 / S288c) (Baker's yeast)).